Here is a 39-residue protein sequence, read N- to C-terminus: Photosystem II reaction center protein J (39 aa).

Residues Leu9–Tyr29 form a helical membrane-spanning segment.

Belongs to the PsbJ family. In terms of assembly, PSII is composed of 1 copy each of membrane proteins PsbA, PsbB, PsbC, PsbD, PsbE, PsbF, PsbH, PsbI, PsbJ, PsbK, PsbL, PsbM, PsbT, PsbX, PsbY, PsbZ, Psb30/Ycf12, at least 3 peripheral proteins of the oxygen-evolving complex and a large number of cofactors. It forms dimeric complexes.

The protein localises to the plastid. It localises to the chloroplast thylakoid membrane. In terms of biological role, one of the components of the core complex of photosystem II (PSII). PSII is a light-driven water:plastoquinone oxidoreductase that uses light energy to abstract electrons from H(2)O, generating O(2) and a proton gradient subsequently used for ATP formation. It consists of a core antenna complex that captures photons, and an electron transfer chain that converts photonic excitation into a charge separation. The chain is Photosystem II reaction center protein J from Phaeodactylum tricornutum (strain CCAP 1055/1).